We begin with the raw amino-acid sequence, 469 residues long: Ribulose bisphosphate carboxylase large chain (469 aa).

K5 is modified (N6,N6,N6-trimethyllysine). Residues N114 and T164 each coordinate substrate. The active-site Proton acceptor is K166. K168 serves as a coordination point for substrate. Mg(2+) contacts are provided by K192, D194, and E195. K192 bears the N6-carboxylysine mark. Residue H285 is the Proton acceptor of the active site. R286, H318, and S370 together coordinate substrate.

The protein belongs to the RuBisCO large chain family. Type I subfamily. As to quaternary structure, heterohexadecamer of 8 large chains and 8 small chains; disulfide-linked. The disulfide link is formed within the large subunit homodimers. The cofactor is Mg(2+). Post-translationally, the disulfide bond which can form in the large chain dimeric partners within the hexadecamer appears to be associated with oxidative stress and protein turnover.

It is found in the plastid. Its subcellular location is the chloroplast. The catalysed reaction is 2 (2R)-3-phosphoglycerate + 2 H(+) = D-ribulose 1,5-bisphosphate + CO2 + H2O. It carries out the reaction D-ribulose 1,5-bisphosphate + O2 = 2-phosphoglycolate + (2R)-3-phosphoglycerate + 2 H(+). In terms of biological role, ruBisCO catalyzes two reactions: the carboxylation of D-ribulose 1,5-bisphosphate, the primary event in carbon dioxide fixation, as well as the oxidative fragmentation of the pentose substrate in the photorespiration process. Both reactions occur simultaneously and in competition at the same active site. The protein is Ribulose bisphosphate carboxylase large chain of Antirhea lucida (Palo iloron).